Reading from the N-terminus, the 508-residue chain is Histidine ammonia-lyase (508 aa).

The 5-imidazolinone (Ala-Gly) cross-link spans 145-147; it reads ASG. S146 is subject to 2,3-didehydroalanine (Ser).

This sequence belongs to the PAL/histidase family. Post-translationally, contains an active site 4-methylidene-imidazol-5-one (MIO), which is formed autocatalytically by cyclization and dehydration of residues Ala-Ser-Gly.

The protein resides in the cytoplasm. The enzyme catalyses L-histidine = trans-urocanate + NH4(+). The protein operates within amino-acid degradation; L-histidine degradation into L-glutamate; N-formimidoyl-L-glutamate from L-histidine: step 1/3. This is Histidine ammonia-lyase from Myxococcus xanthus (strain DK1622).